Here is a 99-residue protein sequence, read N- to C-terminus: Large ribosomal subunit protein bL21 (99 aa).

Belongs to the bacterial ribosomal protein bL21 family. In terms of assembly, part of the 50S ribosomal subunit. Contacts protein L20.

Functionally, this protein binds to 23S rRNA in the presence of protein L20. This chain is Large ribosomal subunit protein bL21, found in Deinococcus geothermalis (strain DSM 11300 / CIP 105573 / AG-3a).